The sequence spans 1447 residues: MGARASVLSGGELDRWEKIRLRPGGKKKYKLKHIVWASRELERFAVNPGLLETSEGCRQILGQLQPSLQTGSEELRSLYNTVATLYCVHQRIEIKDTKEALDKIEEEQNKSKKKAQQAAADTGHSSQVSQNYPIVQNIQGQMVHQAISPRTLNAWVKVVEEKAFSPEVIPMFSALSEGATPQDLNTMLNTVGGHQAAMQMLKETINEEAAEWDRVHPVHAGPIAPGQMREPRGSDIAGTTSTLQEQIGWMTNNPPIPVGEIYKRWIILGLNKIVRMYSPTSILDIRQGPKEPFRDYVDRFYKTLRAEQASQEVKNWMTETLLVQNANPDCKTILKALGPAATLEEMMTACQGVGGPGHKARVLAEAMSQVTNTATIMMQRGNFRNQRKMVKCFNCGKEGHTARNCRAPRKKGCWKCGKEGHQMKDCTERQANFLREDLAFLQGKAREFSSEQTRANSPTISSEQTRANSPTRRELQVWGRDNNSPSEAGADRQGTVSFNFPQITLWQRPLVTIKIGGQLKEALLDTGADDTVLEEMSLPGRWKPKMIGGIGGFIKVRQYDQILIEICGHKAIGTVLVGPTPVNIIGRNLLTQIGCTLNFPISPIETVPVKLKPGMDGPKVKQWPLTEEKIKALVEICTEMEKEGKISKIGPENPYNTPVFAIKKKDSTKWRKLVDFRELNKRTQDFWEVQLGIPHPAGLKKKKSVTVLDVGDAYFSVPLDEDFRKYTAFTIPSINNETPGIRYQYNVLPQGWKGSPAIFQSSMTKILEPFKKQNPDIVIYQYMDDLYVGSDLEIGQHRTKIEELRQHLLRWGLTTPDKKHQKEPPFLWMGYELHPDKWTVQPIVLPEKDSWTVNDIQKLVGKLNWASQIYPGIKVRQLCKLLRGTKALTEVIPLTEEAELELAENREILKEPVHGVYYDPSKDLIAEIQKQGQGQWTYQIYQEPFKNLKTGKYARMRGAHTNDVKQLTEAVQKITTESIVIWGKTPKFKLPIQKETWETWWTEYWQATWIPEWEFVNTPPLVKLWYQLEKEPIVGAETFYVDGAANRETKLGKAGYVTNKGRQKVVPLTNTTNQKTELQAIYLALQDSGLEVNIVTDSQYALGIIQAQPDKSESELVNQIIEQLIKKEKVYLAWVPAHKGIGGNEQVDKLVSAGIRKILFLDGIDKAQDEHEKYHSNWRAMASDFNLPPVVAKEIVASCDKCQLKGEAMHGQVDCSPGIWQLDCTHLEGKVILVAVHVASGYIEAEVIPAETGQETAYFLLKLAGRWPVKTIHTDNGSNFTSATVKAACWWAGIKQEFGIPYNPQSQGVVESMNKELKKIIGQVRDQAEHLKTAVQMAVFIHNFKRKGGIGGYSAGERIVDIIATDIQTKELQKQITKIQNFRVYYRDSRNPLWKGPAKLLWKGEGAVVIQDNSDIKVVPRRKAKIIRDYGKQMAGDDCVASRQDED.

G2 is lipidated: N-myristoyl glycine; by host. The tract at residues 7–31 (VLSGGELDRWEKIRLRPGGKKKYKL) is interaction with Gp41. Residues 8-43 (LSGGELDRWEKIRLRPGGKKKYKLKHIVWASRELER) are interaction with host CALM1. Residues 12 to 19 (ELDRWEKI) are interaction with host AP3D1. The interaction with membrane phosphatidylinositol 4,5-bisphosphate and RNA stretch occupies residues 14-33 (DRWEKIRLRPGGKKKYKLKH). Positions 16–22 (WEKIRLR) match the Nuclear export signal motif. Residues 26–32 (KKKYKLK) carry the Nuclear localization signal motif. Residues 73-77 (EELRS) form an interaction with membrane phosphatidylinositol 4,5-bisphosphate region. A disordered region spans residues 106–128 (EEQNKSKKKAQQAAADTGHSSQV). Y132 carries the phosphotyrosine; by host modification. An interaction with human PPIA/CYPA and NUP153 region spans residues 189 to 227 (NTVGGHQAAMQMLKETINEEAAEWDRVHPVHAGPIAPGQ). Residues 277–363 (YSPTSILDIR…GGPGHKARVL (87 aa)) form a dimerization/Multimerization of capsid protein p24 region. The residue at position 387 (R387) is an Asymmetric dimethylarginine; in Nucleocapsid protein p7; by host PRMT6. The segment at 390–407 (VKCFNCGKEGHTARNCRA) adopts a CCHC-type 1 zinc-finger fold. Position 409 is an asymmetric dimethylarginine; in Nucleocapsid protein p7; by host PRMT6 (R409). Residues 411 to 428 (KGCWKCGKEGHQMKDCTE) form a CCHC-type 2 zinc finger. Residues 446–493 (REFSSEQTRANSPTISSEQTRANSPTRRELQVWGRDNNSPSEAGADRQ) form a disordered region. Residues 450–470 (SEQTRANSPTISSEQTRANSP) are compositionally biased toward polar residues. The segment at 501-505 (PQITL) is dimerization of protease. One can recognise a Peptidase A2 domain in the interval 520–589 (KEALLDTGAD…TPVNIIGRNL (70 aa)). D525 serves as the catalytic For protease activity; shared with dimeric partner. Dimerization of protease regions lie at residues 549-555 (GIGGFIK) and 588-600 (NLLTQIGCTLNFP). The Reverse transcriptase domain maps to 643–833 (EGKISKIGPE…PPFLWMGYEL (191 aa)). Mg(2+) is bound by residues D709, D784, and D785. The tract at residues 826–834 (FLWMGYELH) is RT 'primer grip'. Positions 997-1013 (WETWWTEYWQATWIPEW) match the Tryptophan repeat motif motif. The region spanning 1033–1156 (IVGAETFYVD…VDKLVSAGIR (124 aa)) is the RNase H type-1 domain. Residues D1042, E1077, D1097, and D1148 each contribute to the Mg(2+) site. An Integrase-type zinc finger spans residues 1162–1203 (DGIDKAQDEHEKYHSNWRAMASDFNLPPVVAKEIVASCDKCQ). Zn(2+) is bound by residues H1171, H1175, C1199, and C1202. The Integrase catalytic domain occupies 1213–1363 (VDCSPGIWQL…SAGERIVDII (151 aa)). Residues D1223, D1275, and E1311 each coordinate Mg(2+). Positions 1382-1429 (FRVYYRDSRNPLWKGPAKLLWKGEGAVVIQDNSDIKVVPRRKAKIIRD) form a DNA-binding region, integrase-type.

In terms of assembly, homotrimer; further assembles as hexamers of trimers. Interacts with gp41 (via C-terminus). Interacts with host CALM1; this interaction induces a conformational change in the Matrix protein, triggering exposure of the myristate group. Interacts with host AP3D1; this interaction allows the polyprotein trafficking to multivesicular bodies during virus assembly. Part of the pre-integration complex (PIC) which is composed of viral genome, matrix protein, Vpr and integrase. Homodimer; the homodimer further multimerizes as homohexamers or homopentamers. Interacts with human PPIA/CYPA; This interaction stabilizes the capsid. Interacts with human NUP153. Interacts with host PDZD8; this interaction stabilizes the capsid. Interacts with monkey TRIM5; this interaction destabilizes the capsid. As to quaternary structure, homodimer, whose active site consists of two apposed aspartic acid residues. In terms of assembly, heterodimer of p66 RT and p51 RT (RT p66/p51). Heterodimerization of RT is essential for DNA polymerase activity. The overall folding of the subdomains is similar in p66 RT and p51 RT but the spatial arrangements of the subdomains are dramatically different. Homotetramer; may further associate as a homohexadecamer. Part of the pre-integration complex (PIC) which is composed of viral genome, matrix protein, Vpr and integrase. Interacts with human SMARCB1/INI1 and human PSIP1/LEDGF isoform 1. Interacts with human KPNA3; this interaction might play a role in nuclear import of the pre-integration complex. Interacts with human NUP153; this interaction might play a role in nuclear import of the pre-integration complex. Requires Mg(2+) as cofactor. In terms of processing, specific enzymatic cleavages by the viral protease yield mature proteins. The protease is released by autocatalytic cleavage. The polyprotein is cleaved during and after budding, this process is termed maturation. Proteolytic cleavage of p66 RT removes the RNase H domain to yield the p51 RT subunit. Nucleocapsid protein p7 might be further cleaved after virus entry. Tyrosine phosphorylated presumably in the virion by a host kinase. Phosphorylation is apparently not a major regulator of membrane association. Post-translationally, phosphorylated possibly by host MAPK1; this phosphorylation is necessary for Pin1-mediated virion uncoating. In terms of processing, methylated by host PRMT6, impairing its function by reducing RNA annealing and the initiation of reverse transcription.

The protein resides in the host cell membrane. It localises to the host endosome. The protein localises to the host multivesicular body. Its subcellular location is the virion membrane. It is found in the host nucleus. The protein resides in the host cytoplasm. It localises to the virion. It carries out the reaction Specific for a P1 residue that is hydrophobic, and P1' variable, but often Pro.. The enzyme catalyses 3'-end directed exonucleolytic cleavage of viral RNA-DNA hybrid.. It catalyses the reaction Endohydrolysis of RNA in RNA/DNA hybrids. Three different cleavage modes: 1. sequence-specific internal cleavage of RNA. Human immunodeficiency virus type 1 and Moloney murine leukemia virus enzymes prefer to cleave the RNA strand one nucleotide away from the RNA-DNA junction. 2. RNA 5'-end directed cleavage 13-19 nucleotides from the RNA end. 3. DNA 3'-end directed cleavage 15-20 nucleotides away from the primer terminus.. The catalysed reaction is DNA(n) + a 2'-deoxyribonucleoside 5'-triphosphate = DNA(n+1) + diphosphate. Protease: The viral protease is inhibited by many synthetic protease inhibitors (PIs), such as amprenavir, atazanavir, indinavir, loprinavir, nelfinavir, ritonavir and saquinavir. Use of protease inhibitors in tritherapy regimens permit more ambitious therapeutic strategies. Reverse transcriptase/ribonuclease H: RT can be inhibited either by nucleoside RT inhibitors (NRTIs) or by non nucleoside RT inhibitors (NNRTIs). NRTIs act as chain terminators, whereas NNRTIs inhibit DNA polymerization by binding a small hydrophobic pocket near the RT active site and inducing an allosteric change in this region. Classical NRTIs are abacavir, adefovir (PMEA), didanosine (ddI), lamivudine (3TC), stavudine (d4T), tenofovir (PMPA), zalcitabine (ddC), and zidovudine (AZT). Classical NNRTIs are atevirdine (BHAP U-87201E), delavirdine, efavirenz (DMP-266), emivirine (I-EBU), and nevirapine (BI-RG-587). The tritherapies used as a basic effective treatment of AIDS associate two NRTIs and one NNRTI. Mediates, with Gag polyprotein, the essential events in virion assembly, including binding the plasma membrane, making the protein-protein interactions necessary to create spherical particles, recruiting the viral Env proteins, and packaging the genomic RNA via direct interactions with the RNA packaging sequence (Psi). Gag-Pol polyprotein may regulate its own translation, by the binding genomic RNA in the 5'-UTR. At low concentration, the polyprotein would promote translation, whereas at high concentration, the polyprotein would encapsidate genomic RNA and then shut off translation. Its function is as follows. Targets the polyprotein to the plasma membrane via a multipartite membrane-binding signal, that includes its myristoylated N-terminus. Matrix protein is part of the pre-integration complex. Implicated in the release from host cell mediated by Vpu. Binds to RNA. Functionally, forms the conical core that encapsulates the genomic RNA-nucleocapsid complex in the virion. Most core are conical, with only 7% tubular. The core is constituted by capsid protein hexamer subunits. The core is disassembled soon after virion entry. Host restriction factors such as TRIM5-alpha or TRIMCyp bind retroviral capsids and cause premature capsid disassembly, leading to blocks in reverse transcription. Capsid restriction by TRIM5 is one of the factors which restricts HIV-1 to the human species. Host PIN1 apparently facilitates the virion uncoating. On the other hand, interactions with PDZD8 or CYPA stabilize the capsid. In terms of biological role, encapsulates and protects viral dimeric unspliced genomic RNA (gRNA). Binds these RNAs through its zinc fingers. Acts as a nucleic acid chaperone which is involved in rearangement of nucleic acid secondary structure during gRNA retrotranscription. Also facilitates template switch leading to recombination. As part of the polyprotein, participates in gRNA dimerization, packaging, tRNA incorporation and virion assembly. Aspartyl protease that mediates proteolytic cleavages of Gag and Gag-Pol polyproteins during or shortly after the release of the virion from the plasma membrane. Cleavages take place as an ordered, step-wise cascade to yield mature proteins. This process is called maturation. Displays maximal activity during the budding process just prior to particle release from the cell. Also cleaves Nef and Vif, probably concomitantly with viral structural proteins on maturation of virus particles. Hydrolyzes host EIF4GI and PABP1 in order to shut off the capped cellular mRNA translation. The resulting inhibition of cellular protein synthesis serves to ensure maximal viral gene expression and to evade host immune response. Also mediates cleavage of host YTHDF3. Mediates cleavage of host CARD8, thereby activating the CARD8 inflammasome, leading to the clearance of latent HIV-1 in patient CD4(+) T-cells after viral reactivation; in contrast, HIV-1 can evade CARD8-sensing when its protease remains inactive in infected cells prior to viral budding. Its function is as follows. Multifunctional enzyme that converts the viral RNA genome into dsDNA in the cytoplasm, shortly after virus entry into the cell. This enzyme displays a DNA polymerase activity that can copy either DNA or RNA templates, and a ribonuclease H (RNase H) activity that cleaves the RNA strand of RNA-DNA heteroduplexes in a partially processive 3' to 5' endonucleasic mode. Conversion of viral genomic RNA into dsDNA requires many steps. A tRNA(3)-Lys binds to the primer-binding site (PBS) situated at the 5'-end of the viral RNA. RT uses the 3' end of the tRNA primer to perform a short round of RNA-dependent minus-strand DNA synthesis. The reading proceeds through the U5 region and ends after the repeated (R) region which is present at both ends of viral RNA. The portion of the RNA-DNA heteroduplex is digested by the RNase H, resulting in a ssDNA product attached to the tRNA primer. This ssDNA/tRNA hybridizes with the identical R region situated at the 3' end of viral RNA. This template exchange, known as minus-strand DNA strong stop transfer, can be either intra- or intermolecular. RT uses the 3' end of this newly synthesized short ssDNA to perform the RNA-dependent minus-strand DNA synthesis of the whole template. RNase H digests the RNA template except for two polypurine tracts (PPTs) situated at the 5'-end and near the center of the genome. It is not clear if both polymerase and RNase H activities are simultaneous. RNase H probably can proceed both in a polymerase-dependent (RNA cut into small fragments by the same RT performing DNA synthesis) and a polymerase-independent mode (cleavage of remaining RNA fragments by free RTs). Secondly, RT performs DNA-directed plus-strand DNA synthesis using the PPTs that have not been removed by RNase H as primers. PPTs and tRNA primers are then removed by RNase H. The 3' and 5' ssDNA PBS regions hybridize to form a circular dsDNA intermediate. Strand displacement synthesis by RT to the PBS and PPT ends produces a blunt ended, linear dsDNA copy of the viral genome that includes long terminal repeats (LTRs) at both ends. Functionally, catalyzes viral DNA integration into the host chromosome, by performing a series of DNA cutting and joining reactions. This enzyme activity takes place after virion entry into a cell and reverse transcription of the RNA genome in dsDNA. The first step in the integration process is 3' processing. This step requires a complex comprising the viral genome, matrix protein, Vpr and integrase. This complex is called the pre-integration complex (PIC). The integrase protein removes 2 nucleotides from each 3' end of the viral DNA, leaving recessed CA OH's at the 3' ends. In the second step, the PIC enters cell nucleus. This process is mediated through integrase and Vpr proteins, and allows the virus to infect a non dividing cell. This ability to enter the nucleus is specific of lentiviruses, other retroviruses cannot and rely on cell division to access cell chromosomes. In the third step, termed strand transfer, the integrase protein joins the previously processed 3' ends to the 5' ends of strands of target cellular DNA at the site of integration. The 5'-ends are produced by integrase-catalyzed staggered cuts, 5 bp apart. A Y-shaped, gapped, recombination intermediate results, with the 5'-ends of the viral DNA strands and the 3' ends of target DNA strands remaining unjoined, flanking a gap of 5 bp. The last step is viral DNA integration into host chromosome. This involves host DNA repair synthesis in which the 5 bp gaps between the unjoined strands are filled in and then ligated. Since this process occurs at both cuts flanking the HIV genome, a 5 bp duplication of host DNA is produced at the ends of HIV-1 integration. Alternatively, Integrase may catalyze the excision of viral DNA just after strand transfer, this is termed disintegration. This is Gag-Pol polyprotein (gag-pol) from Human immunodeficiency virus type 1 group M subtype B (isolate BH10) (HIV-1).